The following is a 96-amino-acid chain: Co-chaperonin GroES (96 aa).

Belongs to the GroES chaperonin family. Heptamer of 7 subunits arranged in a ring. Interacts with the chaperonin GroEL.

It localises to the cytoplasm. Its function is as follows. Together with the chaperonin GroEL, plays an essential role in assisting protein folding. The GroEL-GroES system forms a nano-cage that allows encapsulation of the non-native substrate proteins and provides a physical environment optimized to promote and accelerate protein folding. GroES binds to the apical surface of the GroEL ring, thereby capping the opening of the GroEL channel. This chain is Co-chaperonin GroES, found in Cupriavidus necator (strain ATCC 17699 / DSM 428 / KCTC 22496 / NCIMB 10442 / H16 / Stanier 337) (Ralstonia eutropha).